The following is an 840-amino-acid chain: Leucine--tRNA ligase (840 aa).

Positions 44–55 match the 'HIGH' region motif; that stretch reads PYPSANGLHVGH. The short motif at 617-621 is the 'KMSKS' region element; that stretch reads KMSKS. K620 contributes to the ATP binding site.

This sequence belongs to the class-I aminoacyl-tRNA synthetase family.

It is found in the cytoplasm. The enzyme catalyses tRNA(Leu) + L-leucine + ATP = L-leucyl-tRNA(Leu) + AMP + diphosphate. This chain is Leucine--tRNA ligase, found in Borreliella burgdorferi (strain ATCC 35210 / DSM 4680 / CIP 102532 / B31) (Borrelia burgdorferi).